Here is a 513-residue protein sequence, read N- to C-terminus: EGF-like domain-containing protein 1 (513 aa).

An N-terminal signal peptide occupies residues 1 to 21 (MMHTFLRRLCVVALCLGYIKA). The region spanning 72 to 108 (PTALCGPPCLNGGECYEPTVGTYMCMCPEAFYGNKCE) is the EGF-like domain. 3 cysteine pairs are disulfide-bonded: Cys-76–Cys-86, Cys-80–Cys-96, and Cys-98–Cys-107. The region spanning 115–364 (ECSGTEITIN…TSCDSVVCPS (250 aa)) is the ZP domain. The disordered stretch occupies residues 356 to 411 (SCDSVVCPSPPQSVPSNPQNIPPANPQNIPPANPQNIPPANPQISPSSSQRKRRAA). Positions 375–396 (NIPPANPQNIPPANPQNIPPAN) are enriched in pro residues. Asn-438 and Asn-503 each carry an N-linked (GlcNAc...) asparagine glycan.

In terms of tissue distribution, component of the acid-insoluble organic matrix of calcified layers of the shell (at protein level).

It localises to the secreted. The polypeptide is EGF-like domain-containing protein 1 (Lottia gigantea (Giant owl limpet)).